Here is a 115-residue protein sequence, read N- to C-terminus: uncharacterized protein (115 aa).

This is an uncharacterized protein from Treponema pallidum (strain Nichols).